A 153-amino-acid polypeptide reads, in one-letter code: Superoxide dismutase [Cu-Zn] (153 aa).

Residues histidine 45, histidine 47, and histidine 62 each coordinate Cu cation. Cysteine 56 and cysteine 145 are oxidised to a cystine. Zn(2+) contacts are provided by histidine 62, histidine 70, histidine 79, and aspartate 82. Histidine 119 is a Cu cation binding site.

The protein belongs to the Cu-Zn superoxide dismutase family. In terms of assembly, homodimer. Cu cation serves as cofactor. It depends on Zn(2+) as a cofactor.

It localises to the cytoplasm. The catalysed reaction is 2 superoxide + 2 H(+) = H2O2 + O2. In terms of biological role, destroys radicals which are normally produced within the cells and which are toxic to biological systems. This is Superoxide dismutase [Cu-Zn] from Drosophila orena (Fruit fly).